A 276-amino-acid polypeptide reads, in one-letter code: Large ribosomal subunit protein uL2 (276 aa).

The interval 212-276 (NRHRGIRPQT…KLIISRKKHK (65 aa)) is disordered. The span at 257-276 (YKTRKKKASDKLIISRKKHK) shows a compositional bias: basic residues.

Belongs to the universal ribosomal protein uL2 family. In terms of assembly, part of the 50S ribosomal subunit. Forms a bridge to the 30S subunit in the 70S ribosome.

Functionally, one of the primary rRNA binding proteins. Required for association of the 30S and 50S subunits to form the 70S ribosome, for tRNA binding and peptide bond formation. It has been suggested to have peptidyltransferase activity; this is somewhat controversial. Makes several contacts with the 16S rRNA in the 70S ribosome. This chain is Large ribosomal subunit protein uL2, found in Helicobacter pylori (strain P12).